Consider the following 284-residue polypeptide: Syntaxin-like protein psy1 (284 aa).

The stretch at 23–57 (EEIDHIRDAIRQIEDNVGRIEMLHQQSLQEIDEAN) forms a coiled coil. A t-SNARE coiled-coil homology domain is found at 181–243 (LREVQERHAD…GEGTQHMDRA (63 aa)). The helical; Anchor for type IV membrane protein transmembrane segment at 260–280 (ICVVIICVIVAVLCGVLIPVL) threads the bilayer.

The protein belongs to the syntaxin family.

Its subcellular location is the cell membrane. It localises to the prospore membrane. This is Syntaxin-like protein psy1 (psy1) from Schizosaccharomyces pombe (strain 972 / ATCC 24843) (Fission yeast).